The following is a 28-amino-acid chain: uncharacterized protein (28 aa).

The protein localises to the cell inner membrane. This is an uncharacterized protein from Escherichia coli (strain K12).